Reading from the N-terminus, the 517-residue chain is Protein ERGIC-53 (517 aa).

Residues 1-30 form the signal peptide; the sequence is MAVSRRRVPQAGARSFFCALLLSFSQFTGS. Over 31–484 the chain is Lumenal; sequence DGTGGDAAAP…DLPPFPSCLS (454 aa). Positions 52–275 constitute an L-type lectin-like domain; it reads RRFEYKYSFK…DVLSFLTFQL (224 aa). The a carbohydrate site is built by S96 and D129. Ca(2+)-binding residues include D160, F162, and N164. A carbohydrate is bound by residues N164 and H186. D189 serves as a coordination point for Ca(2+). A disulfide bridge links C198 with C238. 259 to 261 contacts a carbohydrate; the sequence is GGL. The residue at position 433 (S433) is a Phosphoserine. The chain crosses the membrane as a helical span at residues 485-505; it reads TIHFVIFVVVQTVLFVGYIMY. Over 506 to 517 the chain is Cytoplasmic; that stretch reads RTQQEAAAKKFF. The segment at 506 to 517 is mediates interaction with RAB3GAP1, RAB3GAP2 and UBXN6; sequence RTQQEAAAKKFF. The ER export motif motif lies at 516–517; the sequence is FF.

In terms of assembly, exists both as a covalent disulfide-linked homohexamer, and a complex of three disulfide-linked dimers non-covalently kept together. Interacts with MCFD2. May interact with TMEM115. Interacts with RAB3GAP1 and RAB3GAP2. Interacts with UBXN6. Interacts with SERPINA1/alpha1-antitrypsin. Interacts with BET1.

It is found in the endoplasmic reticulum-Golgi intermediate compartment membrane. The protein localises to the golgi apparatus membrane. The protein resides in the endoplasmic reticulum membrane. In terms of biological role, mannose-specific lectin. May recognize sugar residues of glycoproteins, glycolipids, or glycosylphosphatidyl inositol anchors and may be involved in the sorting or recycling of proteins, lipids, or both. The LMAN1-MCFD2 complex forms a specific cargo receptor for the ER-to-Golgi transport of selected proteins. The polypeptide is Protein ERGIC-53 (Lman1) (Mus musculus (Mouse)).